Here is a 454-residue protein sequence, read N- to C-terminus: Bifunctional protein GlmU (454 aa).

The interval 1–230 (MSGRFAVILA…LSETMGVNDR (230 aa)) is pyrophosphorylase. UDP-N-acetyl-alpha-D-glucosamine-binding positions include 9 to 12 (LAAG), K23, Q73, and 78 to 79 (GT). A Mg(2+)-binding site is contributed by D103. Residues G140, E155, N170, and N228 each contribute to the UDP-N-acetyl-alpha-D-glucosamine site. A Mg(2+)-binding site is contributed by N228. The linker stretch occupies residues 231–251 (VALSQAEAAMRKRINEEWMRQ). The interval 252 to 454 (GVTIIDPQTT…NKDNYVKKDV (203 aa)) is N-acetyltransferase. UDP-N-acetyl-alpha-D-glucosamine-binding residues include R333 and K351. The active-site Proton acceptor is H363. UDP-N-acetyl-alpha-D-glucosamine contacts are provided by Y366 and N377. Acetyl-CoA-binding positions include 386–387 (NY), S405, A423, and R440.

It in the N-terminal section; belongs to the N-acetylglucosamine-1-phosphate uridyltransferase family. The protein in the C-terminal section; belongs to the transferase hexapeptide repeat family. In terms of assembly, homotrimer. Mg(2+) is required as a cofactor.

It localises to the cytoplasm. It catalyses the reaction alpha-D-glucosamine 1-phosphate + acetyl-CoA = N-acetyl-alpha-D-glucosamine 1-phosphate + CoA + H(+). It carries out the reaction N-acetyl-alpha-D-glucosamine 1-phosphate + UTP + H(+) = UDP-N-acetyl-alpha-D-glucosamine + diphosphate. The protein operates within nucleotide-sugar biosynthesis; UDP-N-acetyl-alpha-D-glucosamine biosynthesis; N-acetyl-alpha-D-glucosamine 1-phosphate from alpha-D-glucosamine 6-phosphate (route II): step 2/2. It participates in nucleotide-sugar biosynthesis; UDP-N-acetyl-alpha-D-glucosamine biosynthesis; UDP-N-acetyl-alpha-D-glucosamine from N-acetyl-alpha-D-glucosamine 1-phosphate: step 1/1. It functions in the pathway bacterial outer membrane biogenesis; LPS lipid A biosynthesis. Its function is as follows. Catalyzes the last two sequential reactions in the de novo biosynthetic pathway for UDP-N-acetylglucosamine (UDP-GlcNAc). The C-terminal domain catalyzes the transfer of acetyl group from acetyl coenzyme A to glucosamine-1-phosphate (GlcN-1-P) to produce N-acetylglucosamine-1-phosphate (GlcNAc-1-P), which is converted into UDP-GlcNAc by the transfer of uridine 5-monophosphate (from uridine 5-triphosphate), a reaction catalyzed by the N-terminal domain. This Shouchella clausii (strain KSM-K16) (Alkalihalobacillus clausii) protein is Bifunctional protein GlmU.